The following is a 434-amino-acid chain: Galactofuranosyl glycosyltransferase (434 aa).

Residues 1–18 (MAPPRWHHDRRRMAIFVR) are Cytoplasmic-facing. Residues 19-38 (VGLYTLLFLMGYVVPLIIFY) form a helical; Signal-anchor for type II membrane protein membrane-spanning segment. Residues asparagine 39, asparagine 100, asparagine 162, and asparagine 388 are each glycosylated (N-linked (GlcNAc...) asparagine). At 39 to 434 (NRSRADTFED…KLLDFPVDPS (396 aa)) the chain is on the lumenal side.

This sequence belongs to the glycosyltransferase 2 family.

The protein resides in the endoplasmic reticulum membrane. It functions in the pathway glycolipid biosynthesis; glycosylphosphatidylinositol-anchor biosynthesis. In terms of biological role, glycosyltransferase that may be responsible for the addition of galactofuranosyl residues to the nascent lipophosphoglycan (LPG) chain. It could alternatively be involved in the synthesis of the galactofuranosyl donor. The chain is Galactofuranosyl glycosyltransferase (LPG1) from Leishmania donovani.